The primary structure comprises 224 residues: Putative homeobox protein R749 (224 aa).

The segment at 139-162 (KTKTIKKSTSEKKTSPKKKTTSQQ) is disordered. Positions 161-220 (QQIKRVRLSDEERNILESQYSKNNFPSPEIRDELAKKIGKTPRQVQIWFQNKRCKDRKNL) form a DNA-binding region, homeobox.

It is found in the host nucleus. The chain is Putative homeobox protein R749 from Acanthamoeba polyphaga mimivirus (APMV).